We begin with the raw amino-acid sequence, 860 residues long: Semaphorin-3aa (860 aa).

The N-terminal stretch at 1-17 (MDYLVGIFLLLCGVALP) is a signal peptide. Positions 31–515 (RLKLSYNEML…SDLGISQMPL (485 aa)) constitute a Sema domain. N-linked (GlcNAc...) asparagine glycosylation occurs at asparagine 53. Cysteine 104 and cysteine 115 are disulfide-bonded. N-linked (GlcNAc...) asparagine glycosylation occurs at asparagine 126. Intrachain disulfides connect cysteine 133–cysteine 142, cysteine 270–cysteine 382, cysteine 294–cysteine 342, and cysteine 518–cysteine 536. An Ig-like C2-type domain is found at 579–668 (GYSSVEERSV…FIQPLRRINL (90 aa)). N-linked (GlcNAc...) asparagine glycosylation occurs at asparagine 593. Cysteine 652 and cysteine 717 are joined by a disulfide. Residues 725 to 860 (KKPKGKKAPK…HEQQRPPRSV (136 aa)) are disordered. 2 stretches are compositionally biased toward polar residues: residues 748–764 (TPQT…QRAQ) and 782–818 (TGLQ…QPNQ). Basic and acidic residues predominate over residues 838-860 (QLQENKRGRNRRTHEQQRPPRSV).

It belongs to the semaphorin family.

The protein localises to the secreted. May influence outgrowth by a variety of growth cones including those of the posterior lateral line ganglion. In Danio rerio (Zebrafish), this protein is Semaphorin-3aa (sema3aa).